The chain runs to 183 residues: Nascent polypeptide-associated complex subunit beta (183 aa).

Residues 62 to 127 (GADDKKLQTT…GEEKELTELV (66 aa)) form the NAC-A/B domain. Positions 150–183 (QNMQKQAGTEGKKDEDEDDIPDLVEGENFESNVE) are disordered. Residues 164 to 183 (EDEDDIPDLVEGENFESNVE) are compositionally biased toward acidic residues.

The protein belongs to the NAC-beta family. Part of the nascent polypeptide-associated complex (NAC), consisting of egd2 and egd1. NAC associates with ribosomes via egd1.

Its subcellular location is the cytoplasm. The protein localises to the nucleus. Functionally, component of the nascent polypeptide-associated complex (NAC), a dynamic component of the ribosomal exit tunnel, protecting the emerging polypeptides from interaction with other cytoplasmic proteins to ensure appropriate nascent protein targeting. The NAC complex also promotes mitochondrial protein import by enhancing productive ribosome interactions with the outer mitochondrial membrane and blocks the inappropriate interaction of ribosomes translating non-secretory nascent polypeptides with translocation sites in the membrane of the endoplasmic reticulum. EGD1 may act as a transcription factor that exert a negative effect on the expression of several genes that are transcribed by RNA polymerase II. The protein is Nascent polypeptide-associated complex subunit beta (egd1) of Neosartorya fischeri (strain ATCC 1020 / DSM 3700 / CBS 544.65 / FGSC A1164 / JCM 1740 / NRRL 181 / WB 181) (Aspergillus fischerianus).